A 155-amino-acid chain; its full sequence is Protein-export protein SecB (155 aa).

This sequence belongs to the SecB family. As to quaternary structure, homotetramer, a dimer of dimers. One homotetramer interacts with 1 SecA dimer.

It localises to the cytoplasm. One of the proteins required for the normal export of preproteins out of the cell cytoplasm. It is a molecular chaperone that binds to a subset of precursor proteins, maintaining them in a translocation-competent state. It also specifically binds to its receptor SecA. The chain is Protein-export protein SecB from Citrobacter koseri (strain ATCC BAA-895 / CDC 4225-83 / SGSC4696).